Here is a 295-residue protein sequence, read N- to C-terminus: Calcium-regulated actin-bundling protein (295 aa).

In terms of assembly, monomer.

Functionally, may contribute to the structure and reorganization of filopodia and pseudopodia accompanying cell movements. In Dictyostelium discoideum (Social amoeba), this protein is Calcium-regulated actin-bundling protein (abpB).